Reading from the N-terminus, the 45-residue chain is Photosystem II reaction center protein K (45 aa).

A propeptide spanning residues 1–8 (MFSINFLG) is cleaved from the precursor. A helical membrane pass occupies residues 17-37 (FDPIVDVLPIIPLLFLLLAFV).

This sequence belongs to the PsbK family. PSII is composed of 1 copy each of membrane proteins PsbA, PsbB, PsbC, PsbD, PsbE, PsbF, PsbH, PsbI, PsbJ, PsbK, PsbL, PsbM, PsbT, PsbY, PsbZ, Psb30/Ycf12, at least 3 peripheral proteins of the oxygen-evolving complex and a large number of cofactors. It forms dimeric complexes.

Its subcellular location is the plastid. It localises to the chloroplast thylakoid membrane. Its function is as follows. One of the components of the core complex of photosystem II (PSII). PSII is a light-driven water:plastoquinone oxidoreductase that uses light energy to abstract electrons from H(2)O, generating O(2) and a proton gradient subsequently used for ATP formation. It consists of a core antenna complex that captures photons, and an electron transfer chain that converts photonic excitation into a charge separation. This is Photosystem II reaction center protein K from Euglena viridis (Cercaria viridis).